Reading from the N-terminus, the 256-residue chain is MLTYPNINPIAFSFGPLKVHWYGLMYLIGFIGAWLLGYWRIKHYKLNWNNDQLSDLIFYSALGVILGGRVGYMLFYDFQEFIHHPWVLFKIWEGGMSFHGGLLGVVIAAWLFCRKYGKTFLEVGDFVAPLVPLGLAAGRLGNFINGELWGRATDVPWGMIYPHVDDQPRHPSQLYEFGLEGVALFILIWCYASKPRQQGRVSALFLMGYAICRLIAESFRQPDSQLGFVAFGWLTMGQVLSIPMLLIGIWLWWAKR.

The next 3 helical transmembrane spans lie at 19-39 (VHWYGLMYLIGFIGAWLLGYW), 56-76 (LIFYSALGVILGGRVGYMLFY), and 91-111 (IWEGGMSFHGGLLGVVIAAWL). Arg-139 serves as a coordination point for a 1,2-diacyl-sn-glycero-3-phospho-(1'-sn-glycerol). A helical membrane pass occupies residues 231–251 (FGWLTMGQVLSIPMLLIGIWL).

It belongs to the Lgt family.

Its subcellular location is the cell inner membrane. It carries out the reaction L-cysteinyl-[prolipoprotein] + a 1,2-diacyl-sn-glycero-3-phospho-(1'-sn-glycerol) = an S-1,2-diacyl-sn-glyceryl-L-cysteinyl-[prolipoprotein] + sn-glycerol 1-phosphate + H(+). The protein operates within protein modification; lipoprotein biosynthesis (diacylglyceryl transfer). In terms of biological role, catalyzes the transfer of the diacylglyceryl group from phosphatidylglycerol to the sulfhydryl group of the N-terminal cysteine of a prolipoprotein, the first step in the formation of mature lipoproteins. This chain is Phosphatidylglycerol--prolipoprotein diacylglyceryl transferase, found in Legionella pneumophila (strain Corby).